A 327-amino-acid chain; its full sequence is L-lactate dehydrogenase (327 aa).

Residues Val18, Asp39, Lys44, Tyr69, and 83–84 (GA) contribute to the NAD(+) site. Substrate contacts are provided by residues Gln86, Arg92, and 124–127 (NPVD). Residues 122–124 (AAN) and Ser147 each bind NAD(+). 152-155 (DSAR) contributes to the substrate binding site. The beta-D-fructose 1,6-bisphosphate site is built by Arg157 and His172. Catalysis depends on His179, which acts as the Proton acceptor. Tyr224 is subject to Phosphotyrosine. Thr233 serves as a coordination point for substrate.

It belongs to the LDH/MDH superfamily. LDH family. Homotetramer.

Its subcellular location is the cytoplasm. It carries out the reaction (S)-lactate + NAD(+) = pyruvate + NADH + H(+). The protein operates within fermentation; pyruvate fermentation to lactate; (S)-lactate from pyruvate: step 1/1. Its activity is regulated as follows. Allosterically activated by fructose 1,6-bisphosphate (FBP). Functionally, catalyzes the conversion of lactate to pyruvate. In Streptococcus equi subsp. equi (strain 4047), this protein is L-lactate dehydrogenase.